We begin with the raw amino-acid sequence, 427 residues long: 3-phosphoshikimate 1-carboxyvinyltransferase (427 aa).

3-phosphoshikimate contacts are provided by Lys-20, Ser-21, and Arg-25. Lys-20 contacts phosphoenolpyruvate. 2 residues coordinate phosphoenolpyruvate: Gly-92 and Arg-120. 3-phosphoshikimate contacts are provided by Ser-166, Gln-168, Asp-312, and Lys-339. Position 168 (Gln-168) interacts with phosphoenolpyruvate. Asp-312 functions as the Proton acceptor in the catalytic mechanism. Residues Arg-343 and Arg-385 each coordinate phosphoenolpyruvate.

This sequence belongs to the EPSP synthase family. In terms of assembly, monomer.

It localises to the cytoplasm. It carries out the reaction 3-phosphoshikimate + phosphoenolpyruvate = 5-O-(1-carboxyvinyl)-3-phosphoshikimate + phosphate. The protein operates within metabolic intermediate biosynthesis; chorismate biosynthesis; chorismate from D-erythrose 4-phosphate and phosphoenolpyruvate: step 6/7. Its function is as follows. Catalyzes the transfer of the enolpyruvyl moiety of phosphoenolpyruvate (PEP) to the 5-hydroxyl of shikimate-3-phosphate (S3P) to produce enolpyruvyl shikimate-3-phosphate and inorganic phosphate. This is 3-phosphoshikimate 1-carboxyvinyltransferase from Streptococcus equi subsp. zooepidemicus (strain H70).